A 695-amino-acid chain; its full sequence is NADPH--cytochrome P450 reductase (695 aa).

The Lumenal portion of the chain corresponds to 1 to 8 (MAQLDTLD). Residues 9–31 (IVVLVVLLVGSVAYFTKGSYWAV) form a helical membrane-spanning segment. Residues 32–695 (PKDPYAAANS…SGSYQEDVWS (664 aa)) lie on the Cytoplasmic side of the membrane. The Flavodoxin-like domain maps to 66 to 221 (CVIFYGSQTG…DFLAWKEPMW (156 aa)). FMN is bound by residues 72–77 (SQTGTA), 123–126 (ATYG), 169–178 (LGNNTYEHYN), and Asp-204. The 262-residue stretch at 277-538 (HNPYIAPIVE…HVRHSNFKLP (262 aa)) folds into the FAD-binding FR-type domain. An NADP(+)-binding site is contributed by Arg-296. FAD is bound by residues 451-454 (RYYS), 469-471 (TAV), and 486-489 (GVTT). NADP(+) contacts are provided by residues Thr-552, 614-615 (SR), 620-624 (KVYVQ), and Glu-656. Residue Trp-694 coordinates FAD.

The protein belongs to the NADPH--cytochrome P450 reductase family. This sequence in the N-terminal section; belongs to the flavodoxin family. In the C-terminal section; belongs to the flavoprotein pyridine nucleotide cytochrome reductase family. The cofactor is FAD. It depends on FMN as a cofactor.

The protein localises to the endoplasmic reticulum membrane. It localises to the mitochondrion outer membrane. Its subcellular location is the cell membrane. The enzyme catalyses 2 oxidized [cytochrome P450] + NADPH = 2 reduced [cytochrome P450] + NADP(+) + H(+). Functionally, this enzyme is required for electron transfer from NADP to cytochrome P450 in microsomes. It can also provide electron transfer to heme oxygenase and cytochrome B5. Involved in ergosterol biosynthesis. The sequence is that of NADPH--cytochrome P450 reductase from Aspergillus fumigatus (strain ATCC MYA-4609 / CBS 101355 / FGSC A1100 / Af293) (Neosartorya fumigata).